The sequence spans 434 residues: Serine/threonine transporter SstT (434 aa).

9 consecutive transmembrane segments (helical) span residues 14 to 34, 41 to 61, 72 to 92, 135 to 155, 172 to 192, 210 to 230, 282 to 302, 316 to 336, and 351 to 371; these read IVIGIIVGAVLGVMVPSWSFI, FVGALKAIAPLLVFLLIMSAI, FGTVIVLYLSATLFSSIAAVA, ALVEGNYLAILFWSLLIGSGL, TVSAVAQNVIQFAPFGIVGLL, LLMLLVATMVFVYLVVYPFMV, ISIPLGGSANSGGAAITVSIM, IFLALLLCFLSAISATGVSGI, and FGISNDIAMQVVGIGFIIGVV. Residues 413-434 are disordered; that stretch reads GKGTAEVVTPEKTNEAEESEQV.

The protein belongs to the dicarboxylate/amino acid:cation symporter (DAACS) (TC 2.A.23) family.

It localises to the cell membrane. It catalyses the reaction L-serine(in) + Na(+)(in) = L-serine(out) + Na(+)(out). The catalysed reaction is L-threonine(in) + Na(+)(in) = L-threonine(out) + Na(+)(out). Its function is as follows. Involved in the import of serine and threonine into the cell, with the concomitant import of sodium (symport system). The polypeptide is Serine/threonine transporter SstT (Lacticaseibacillus casei (strain BL23) (Lactobacillus casei)).